The sequence spans 397 residues: LL-diaminopimelate aminotransferase (397 aa).

2 residues coordinate substrate: Y14 and G41. Pyridoxal 5'-phosphate contacts are provided by residues Y71, 104–105 (AK), Y128, N174, Y205, and 233–235 (SFS). Residues K105, Y128, and N174 each coordinate substrate. N6-(pyridoxal phosphate)lysine is present on K236. Pyridoxal 5'-phosphate contacts are provided by R244 and N275. 2 residues coordinate substrate: N275 and R368.

It belongs to the class-I pyridoxal-phosphate-dependent aminotransferase family. LL-diaminopimelate aminotransferase subfamily. In terms of assembly, homodimer. It depends on pyridoxal 5'-phosphate as a cofactor.

The catalysed reaction is (2S,6S)-2,6-diaminopimelate + 2-oxoglutarate = (S)-2,3,4,5-tetrahydrodipicolinate + L-glutamate + H2O + H(+). The protein operates within amino-acid biosynthesis; L-lysine biosynthesis via DAP pathway; LL-2,6-diaminopimelate from (S)-tetrahydrodipicolinate (aminotransferase route): step 1/1. In terms of biological role, involved in the synthesis of meso-diaminopimelate (m-DAP or DL-DAP), required for both lysine and peptidoglycan biosynthesis. Catalyzes the direct conversion of tetrahydrodipicolinate to LL-diaminopimelate. This chain is LL-diaminopimelate aminotransferase, found in Chlamydia pneumoniae (Chlamydophila pneumoniae).